Here is a 629-residue protein sequence, read N- to C-terminus: Probable potassium transport system protein Kup 3 (629 aa).

The next 12 membrane-spanning stretches (helical) occupy residues 20 to 40, 54 to 74, 106 to 126, 143 to 163, 171 to 191, 212 to 232, 253 to 273, 291 to 311, 343 to 363, 372 to 392, 400 to 420, and 425 to 445; these read LSLS…LYTF, VTTI…IASV, PFII…GTIT, PSLK…LFAI, IGKA…ILGA, FLFS…LCAT, WFGL…ALVL, FLLP…QAII, IYIG…IIGF, AYGI…FIAL, IITS…FFAA, and FING…MMYI.

The protein belongs to the HAK/KUP transporter (TC 2.A.72) family.

Its subcellular location is the cell inner membrane. The catalysed reaction is K(+)(in) + H(+)(in) = K(+)(out) + H(+)(out). Its function is as follows. Transport of potassium into the cell. Likely operates as a K(+):H(+) symporter. This Legionella pneumophila (strain Paris) protein is Probable potassium transport system protein Kup 3.